Consider the following 298-residue polypeptide: Inosose dehydratase (298 aa).

This sequence belongs to the IolE/MocC family. It depends on glutathione as a cofactor. Co(2+) serves as cofactor. Mn(2+) is required as a cofactor.

It catalyses the reaction scyllo-inosose = 3D-3,5/4-trihydroxycyclohexane-1,2-dione + H2O. The protein operates within polyol metabolism; myo-inositol degradation into acetyl-CoA; acetyl-CoA from myo-inositol: step 2/7. In terms of biological role, catalyzes the dehydration of inosose (2-keto-myo-inositol, 2KMI or 2,4,6/3,5-pentahydroxycyclohexanone) to 3D-(3,5/4)-trihydroxycyclohexane-1,2-dione (D-2,3-diketo-4-deoxy-epi-inositol). In Clostridium beijerinckii (strain ATCC 51743 / NCIMB 8052) (Clostridium acetobutylicum), this protein is Inosose dehydratase.